The primary structure comprises 104 residues: Large ribosomal subunit protein uL24 (104 aa).

Belongs to the universal ribosomal protein uL24 family. Part of the 50S ribosomal subunit.

One of two assembly initiator proteins, it binds directly to the 5'-end of the 23S rRNA, where it nucleates assembly of the 50S subunit. In terms of biological role, one of the proteins that surrounds the polypeptide exit tunnel on the outside of the subunit. This is Large ribosomal subunit protein uL24 from Corynebacterium aurimucosum (strain ATCC 700975 / DSM 44827 / CIP 107346 / CN-1) (Corynebacterium nigricans).